The sequence spans 405 residues: Type III polyketide synthase 10 (405 aa).

Residues 1–18 are compositionally biased toward polar residues; that stretch reads MVSTNAGGIASKQASSMA. The tract at residues 1–20 is disordered; the sequence is MVSTNAGGIASKQASSMAPN. Cysteine 170 acts as the Nucleophile in catalysis.

This sequence belongs to the thiolase-like superfamily. Chalcone/stilbene synthases family. Interacts with STS1. Expressed in adult flowers.

The protein localises to the endoplasmic reticulum. In terms of biological role, plant type III polyketide synthases (PKSs) that catalyzes the condensation of fatty acyl-CoA with malonyl-CoA to generate triketide and tetraketide alpha-pyrones, the main components of pollen exine and potential sporopollenin precursors. May be involved in the synthesis of sporopollenin precursors in tapetal cells to regulate pollen wall formation. Required for exine and Ubisch body formation in anthers. Does not possess chalcone synthase (CHS) activity in vitro with the substrates 4-coumaroyl-CoA and malonyl-CoA. The sequence is that of Type III polyketide synthase 10 from Oryza sativa subsp. japonica (Rice).